Here is a 287-residue protein sequence, read N- to C-terminus: ATP synthase gamma chain (287 aa).

Belongs to the ATPase gamma chain family. F-type ATPases have 2 components, CF(1) - the catalytic core - and CF(0) - the membrane proton channel. CF(1) has five subunits: alpha(3), beta(3), gamma(1), delta(1), epsilon(1). CF(0) has three main subunits: a, b and c.

Its subcellular location is the cell membrane. In terms of biological role, produces ATP from ADP in the presence of a proton gradient across the membrane. The gamma chain is believed to be important in regulating ATPase activity and the flow of protons through the CF(0) complex. In Halothermothrix orenii (strain H 168 / OCM 544 / DSM 9562), this protein is ATP synthase gamma chain.